Reading from the N-terminus, the 125-residue chain is Small ribosomal subunit protein uS12 (125 aa).

Position 89 is a 3-methylthioaspartic acid (Asp-89). The interval 104-125 (LQGVKDRKQSRSKYGSKRPKKA) is disordered. Basic residues predominate over residues 113 to 125 (SRSKYGSKRPKKA).

This sequence belongs to the universal ribosomal protein uS12 family. As to quaternary structure, part of the 30S ribosomal subunit. Contacts proteins S8 and S17. May interact with IF1 in the 30S initiation complex.

In terms of biological role, with S4 and S5 plays an important role in translational accuracy. Functionally, interacts with and stabilizes bases of the 16S rRNA that are involved in tRNA selection in the A site and with the mRNA backbone. Located at the interface of the 30S and 50S subunits, it traverses the body of the 30S subunit contacting proteins on the other side and probably holding the rRNA structure together. The combined cluster of proteins S8, S12 and S17 appears to hold together the shoulder and platform of the 30S subunit. The chain is Small ribosomal subunit protein uS12 from Leptothrix cholodnii (strain ATCC 51168 / LMG 8142 / SP-6) (Leptothrix discophora (strain SP-6)).